We begin with the raw amino-acid sequence, 593 residues long: MAKMRAVDAAMYVLEKEGITTAFGVPGAAINPFYSAMRKHGGIRHILARHVEGASHMAEGYTRATAGNIGVCLGTSGPAGTDMITALYSASADSIPILCITGQAPRARLHKEDFQAVDIEAIAKPVSKMAVTVREAALVPRVLQQAFHLMRSGRPGPVLVDLPFDVQVAEIEFDPDMYEPLPVYKPAASRMQIEKAVEMLIQAERPVIVAGGGVINADAAALLQQFAELTSVPVIPTLMGWGCIPDDHELMAGMVGLQTAHRYGNATLLASDMVFGIGNRFANRHTGSVEKYTEGRKIVHIDIEPTQIGRVLCPDLGIVSDAKAALTLLVEVAQEMQKAGRLPCRKEWVADCQQRKRTLLRKTHFDNVPVKPQRVYEEMNKAFGRDVCYVTTIGLSQIAAAQMLHVFKDRHWINCGQAGPLGWTIPAALGVCAADPKRNVVAISGDFDFQFLIEELAVGAQFNIPYIHVLVNNAYLGLIRQSQRAFDMDYCVQLAFENINSSEVNGYGVDHVKVAEGLGCKAIRVFKPEDIAPAFEQAKALMAQYRVPVVVEVILERVTNISMGSELDNVMEFEDIADNAADAPTETCFMHYE.

The protein belongs to the TPP enzyme family. In terms of assembly, homotetramer. Mg(2+) serves as cofactor. The cofactor is thiamine diphosphate.

It carries out the reaction 2 glyoxylate + H(+) = 2-hydroxy-3-oxopropanoate + CO2. The protein operates within organic acid metabolism; glycolate degradation; 3-phospho-D-glycerate from glycolate: step 2/4. In terms of biological role, catalyzes the condensation of two molecules of glyoxylate to give 2-hydroxy-3-oxopropanoate (also termed tartronate semialdehyde). This Escherichia coli O157:H7 protein is Glyoxylate carboligase (gcl).